Here is a 190-residue protein sequence, read N- to C-terminus: U1 small nuclear ribonucleoprotein C-1 (190 aa).

A Matrin-type zinc finger spans residues 4–36 (YYCDYCDVFLVSESPSVRKAHNSGRNHLTNVRD). The interval 57-190 (FETGGGNSTS…PDRARQLGLI (134 aa)) is disordered. Over residues 72 to 82 (GNPPGSQPGPP) the composition is skewed to pro residues. Residues 109–124 (AMLALMNGQNGMSSPG) are compositionally biased toward low complexity. Residues 125-141 (SGPPPMRFAGPPIPNNM) are compositionally biased toward pro residues. Basic and acidic residues predominate over residues 180–190 (NPDRARQLGLI).

This sequence belongs to the U1 small nuclear ribonucleoprotein C family. As to quaternary structure, U1 snRNP is composed of the 7 core Sm proteins B/B', D1, D2, D3, E, F and G that assemble in a heptameric protein ring on the Sm site of the small nuclear RNA to form the core snRNP, and at least 3 U1 snRNP-specific proteins U1-70K, U1-A and U1-C. U1-C interacts with U1 snRNA and the 5' splice-site region of the pre-mRNA.

The protein localises to the nucleus. Its function is as follows. Component of the spliceosomal U1 snRNP, which is essential for recognition of the pre-mRNA 5' splice-site and the subsequent assembly of the spliceosome. U1-C is directly involved in initial 5' splice-site recognition for both constitutive and regulated alternative splicing. The interaction with the 5' splice-site seems to precede base-pairing between the pre-mRNA and the U1 snRNA. Stimulates commitment or early (E) complex formation by stabilizing the base pairing of the 5' end of the U1 snRNA and the 5' splice-site region. In Puccinia graminis f. sp. tritici (strain CRL 75-36-700-3 / race SCCL) (Black stem rust fungus), this protein is U1 small nuclear ribonucleoprotein C-1.